A 917-amino-acid polypeptide reads, in one-letter code: Translation initiation factor IF-2 (917 aa).

The span at 102–249 (EKSQAEEQAL…KWTAEPKAPE (148 aa)) shows a compositional bias: basic and acidic residues. Residues 102 to 326 (EKSQAEEQAL…KSSTLQQGFH (225 aa)) are disordered. Basic residues predominate over residues 279 to 293 (RRGRTAKAPRAKKNN). Residues 294–306 (RHSEKADREEARA) are compositionally biased toward basic and acidic residues. In terms of domain architecture, tr-type G spans 416 to 585 (SRAPVVTIMG…LLQAEVLELK (170 aa)). The interval 425–432 (GHVDHGKT) is G1. 425 to 432 (GHVDHGKT) contributes to the GTP binding site. The segment at 450 to 454 (GITQH) is G2. The G3 stretch occupies residues 471–474 (DTPG). GTP-binding positions include 471 to 475 (DTPGH) and 525 to 528 (NKID). A G4 region spans residues 525–528 (NKID). A G5 region spans residues 561 to 563 (SAK).

The protein belongs to the TRAFAC class translation factor GTPase superfamily. Classic translation factor GTPase family. IF-2 subfamily.

It localises to the cytoplasm. Functionally, one of the essential components for the initiation of protein synthesis. Protects formylmethionyl-tRNA from spontaneous hydrolysis and promotes its binding to the 30S ribosomal subunits. Also involved in the hydrolysis of GTP during the formation of the 70S ribosomal complex. In Proteus vulgaris, this protein is Translation initiation factor IF-2 (infB).